The following is a 415-amino-acid chain: Gamma-glutamyl phosphate reductase (415 aa).

It belongs to the gamma-glutamyl phosphate reductase family.

Its subcellular location is the cytoplasm. The catalysed reaction is L-glutamate 5-semialdehyde + phosphate + NADP(+) = L-glutamyl 5-phosphate + NADPH + H(+). Its pathway is amino-acid biosynthesis; L-proline biosynthesis; L-glutamate 5-semialdehyde from L-glutamate: step 2/2. Its function is as follows. Catalyzes the NADPH-dependent reduction of L-glutamate 5-phosphate into L-glutamate 5-semialdehyde and phosphate. The product spontaneously undergoes cyclization to form 1-pyrroline-5-carboxylate. The sequence is that of Gamma-glutamyl phosphate reductase from Lachnospira eligens (strain ATCC 27750 / DSM 3376 / VPI C15-48 / C15-B4) (Eubacterium eligens).